The chain runs to 440 residues: Cobyrinate a,c-diamide synthase (440 aa).

The region spanning 247-428 is the GATase cobBQ-type domain; it reads RIAIAYDAAF…MHLYFPSNPR (182 aa). The Nucleophile role is filled by Cys329.

The protein belongs to the CobB/CbiA family. Mg(2+) serves as cofactor.

The catalysed reaction is cob(II)yrinate + 2 L-glutamine + 2 ATP + 2 H2O = cob(II)yrinate a,c diamide + 2 L-glutamate + 2 ADP + 2 phosphate + 2 H(+). It functions in the pathway cofactor biosynthesis; adenosylcobalamin biosynthesis; cob(II)yrinate a,c-diamide from sirohydrochlorin (anaerobic route): step 10/10. Functionally, catalyzes the ATP-dependent amidation of the two carboxylate groups at positions a and c of cobyrinate, using either L-glutamine or ammonia as the nitrogen source. This Picrophilus torridus (strain ATCC 700027 / DSM 9790 / JCM 10055 / NBRC 100828 / KAW 2/3) protein is Cobyrinate a,c-diamide synthase.